Consider the following 539-residue polypeptide: Chaperonin GroEL (539 aa).

ATP-binding positions include 29 to 32 (TIGP), 86 to 90 (DGTTT), G413, 476 to 478 (NAA), and D492.

Belongs to the chaperonin (HSP60) family. Forms a cylinder of 14 subunits composed of two heptameric rings stacked back-to-back. Interacts with the co-chaperonin GroES.

It is found in the cytoplasm. The catalysed reaction is ATP + H2O + a folded polypeptide = ADP + phosphate + an unfolded polypeptide.. Functionally, together with its co-chaperonin GroES, plays an essential role in assisting protein folding. The GroEL-GroES system forms a nano-cage that allows encapsulation of the non-native substrate proteins and provides a physical environment optimized to promote and accelerate protein folding. This chain is Chaperonin GroEL, found in Staphylococcus epidermidis (strain ATCC 12228 / FDA PCI 1200).